A 471-amino-acid polypeptide reads, in one-letter code: ATP synthase subunit beta 1 (471 aa).

157–164 (GGAGVGKT) lines the ATP pocket.

The protein belongs to the ATPase alpha/beta chains family. F-type ATPases have 2 components, CF(1) - the catalytic core - and CF(0) - the membrane proton channel. CF(1) has five subunits: alpha(3), beta(3), gamma(1), delta(1), epsilon(1). CF(0) has three main subunits: a(1), b(2) and c(9-12). The alpha and beta chains form an alternating ring which encloses part of the gamma chain. CF(1) is attached to CF(0) by a central stalk formed by the gamma and epsilon chains, while a peripheral stalk is formed by the delta and b chains.

It localises to the cell inner membrane. It catalyses the reaction ATP + H2O + 4 H(+)(in) = ADP + phosphate + 5 H(+)(out). Produces ATP from ADP in the presence of a proton gradient across the membrane. The catalytic sites are hosted primarily by the beta subunits. The protein is ATP synthase subunit beta 1 of Pelobacter propionicus (strain DSM 2379 / NBRC 103807 / OttBd1).